The chain runs to 396 residues: NADH-quinone oxidoreductase subunit D (396 aa).

This sequence belongs to the complex I 49 kDa subunit family. In terms of assembly, NDH-1 is composed of 14 different subunits. Subunits NuoB, C, D, E, F, and G constitute the peripheral sector of the complex.

It is found in the cell inner membrane. The enzyme catalyses a quinone + NADH + 5 H(+)(in) = a quinol + NAD(+) + 4 H(+)(out). Its function is as follows. NDH-1 shuttles electrons from NADH, via FMN and iron-sulfur (Fe-S) centers, to quinones in the respiratory chain. The immediate electron acceptor for the enzyme in this species is believed to be ubiquinone. Couples the redox reaction to proton translocation (for every two electrons transferred, four hydrogen ions are translocated across the cytoplasmic membrane), and thus conserves the redox energy in a proton gradient. The sequence is that of NADH-quinone oxidoreductase subunit D from Orientia tsutsugamushi (strain Ikeda) (Rickettsia tsutsugamushi).